Reading from the N-terminus, the 527-residue chain is Palmitoleoyl-protein carboxylesterase NOTUM (527 aa).

The N-terminal stretch at 1–19 (MKSYLILNTLLLSLLKING) is a signal peptide. 3 N-linked (GlcNAc...) asparagine glycosylation sites follow: asparagine 64, asparagine 86, and asparagine 104. The active-site Charge relay system is the serine 203. Residue asparagine 249 is glycosylated (N-linked (GlcNAc...) asparagine). Residues aspartate 311 and histidine 359 each act as charge relay system in the active site. N-linked (GlcNAc...) asparagine glycosylation is present at asparagine 451.

This sequence belongs to the pectinacetylesterase family. Notum subfamily. In terms of tissue distribution, expressed in the anterior pole.

It is found in the secreted. The enzyme catalyses [Wnt protein]-O-(9Z)-hexadecenoyl-L-serine + H2O = [Wnt protein]-L-serine + (9Z)-hexadecenoate + H(+). Its function is as follows. Carboxylesterase that acts as a key negative regulator of the Wnt signaling pathway. Acts by specifically mediating depalmitoleoylation of WNT proteins. Serine palmitoleoylation of WNT proteins is required for efficient binding to frizzled receptors. Promotes head regeneration following amputation by inhibiting the Wnt signaling pathway. The protein is Palmitoleoyl-protein carboxylesterase NOTUM of Schmidtea mediterranea (Freshwater planarian flatworm).